The following is a 255-amino-acid chain: DNA repair protein RecO (255 aa).

This sequence belongs to the RecO family.

In terms of biological role, involved in DNA repair and RecF pathway recombination. The chain is DNA repair protein RecO from Acidithiobacillus ferrooxidans (strain ATCC 23270 / DSM 14882 / CIP 104768 / NCIMB 8455) (Ferrobacillus ferrooxidans (strain ATCC 23270)).